Here is a 268-residue protein sequence, read N- to C-terminus: Imidazole glycerol phosphate synthase subunit HisF (268 aa).

Residues Asp12 and Asp131 contribute to the active site.

Belongs to the HisA/HisF family. In terms of assembly, heterodimer of HisH and HisF.

The protein localises to the cytoplasm. The enzyme catalyses 5-[(5-phospho-1-deoxy-D-ribulos-1-ylimino)methylamino]-1-(5-phospho-beta-D-ribosyl)imidazole-4-carboxamide + L-glutamine = D-erythro-1-(imidazol-4-yl)glycerol 3-phosphate + 5-amino-1-(5-phospho-beta-D-ribosyl)imidazole-4-carboxamide + L-glutamate + H(+). The protein operates within amino-acid biosynthesis; L-histidine biosynthesis; L-histidine from 5-phospho-alpha-D-ribose 1-diphosphate: step 5/9. IGPS catalyzes the conversion of PRFAR and glutamine to IGP, AICAR and glutamate. The HisF subunit catalyzes the cyclization activity that produces IGP and AICAR from PRFAR using the ammonia provided by the HisH subunit. In Salinibacter ruber (strain DSM 13855 / M31), this protein is Imidazole glycerol phosphate synthase subunit HisF.